A 347-amino-acid chain; its full sequence is Spermidine/putrescine import ATP-binding protein PotA (347 aa).

Residues I6 to I236 enclose the ABC transporter domain. ATP is bound at residue G38–T45.

This sequence belongs to the ABC transporter superfamily. Spermidine/putrescine importer (TC 3.A.1.11.1) family. As to quaternary structure, the complex is composed of two ATP-binding proteins (PotA), two transmembrane proteins (PotB and PotC) and a solute-binding protein (PotD).

Its subcellular location is the cell membrane. It carries out the reaction ATP + H2O + polyamine-[polyamine-binding protein]Side 1 = ADP + phosphate + polyamineSide 2 + [polyamine-binding protein]Side 1.. Its function is as follows. Part of the ABC transporter complex PotABCD involved in spermidine/putrescine import. Responsible for energy coupling to the transport system. The sequence is that of Spermidine/putrescine import ATP-binding protein PotA from Clostridioides difficile (strain 630) (Peptoclostridium difficile).